The following is a 114-amino-acid chain: Ribonuclease P protein component (114 aa).

Belongs to the RnpA family. In terms of assembly, consists of a catalytic RNA component (M1 or rnpB) and a protein subunit.

The catalysed reaction is Endonucleolytic cleavage of RNA, removing 5'-extranucleotides from tRNA precursor.. RNaseP catalyzes the removal of the 5'-leader sequence from pre-tRNA to produce the mature 5'-terminus. It can also cleave other RNA substrates such as 4.5S RNA. The protein component plays an auxiliary but essential role in vivo by binding to the 5'-leader sequence and broadening the substrate specificity of the ribozyme. The chain is Ribonuclease P protein component from Limosilactobacillus fermentum (strain NBRC 3956 / LMG 18251) (Lactobacillus fermentum).